A 314-amino-acid chain; its full sequence is Ribosomal protein L11 methyltransferase (314 aa).

Residues Thr161, Gly182, Asp204, and Asn248 each contribute to the S-adenosyl-L-methionine site.

Belongs to the methyltransferase superfamily. PrmA family.

Its subcellular location is the cytoplasm. It catalyses the reaction L-lysyl-[protein] + 3 S-adenosyl-L-methionine = N(6),N(6),N(6)-trimethyl-L-lysyl-[protein] + 3 S-adenosyl-L-homocysteine + 3 H(+). Its function is as follows. Methylates ribosomal protein L11. This Listeria innocua serovar 6a (strain ATCC BAA-680 / CLIP 11262) protein is Ribosomal protein L11 methyltransferase.